We begin with the raw amino-acid sequence, 786 residues long: MMEENKQLAQRIDGAIQCAKQDVANLRAELTATGHRLAELGELEEPGEPQEHQQQQQQQNHQDAPVQRQKALTELGQKGDVASQETSLDKVLLHEEVLRLQEEVSVLKQVREMLNRELEETGGGCSVELMSVSQLRVQLTQKEQELDRAKEALQAMKTDRKRLRLERTDLVNQMQQLYTTLESREEQLRDFIRNYEQHRKESEDAVRVLAREKDLLEREKWDLRRQTKEATEHAGALRSALDLKESRIKELEAELTMAKQSLATLTKDVPKRHSLAMPTETVVNGNQEWAMHAELPLTAAIRQSQQNLYHSIDRQVLKASPCVCDGDGISMMSSAAARISPCHSKQASVMSDASVMEGERSSTPSDSPRHRTHSLCNSLEDLEEQRRRKKKERMGLGSLSRVFGRGKQRKSMDPTLFDDSDSLSSPARLSVSLSECEEQLDRLQQVELARSAPMCRWRAGTVQAWLEVIMAMPMYMRACADNVKSGKVLLVLTDEDLGNVLGISNSMHRRKLRLAIEDYRDAEAGHGLSKAAELDHHWVAQAWLTDVGLPQYSQFFHTHLVDGRLLSTLTRADLEKHLHVSKKAHQNSLLLGIQLLHTLNFDKEILQSRRSECENQNTDPAVWTCQRIIKWIKEIDLKEFADNLQTSGVHGAVMVLDPSFRSDTMATALCIPSNKHMVRHHLSEEMKALVSAARAGLEQEVEPLGTPPTLHRQSSLSSSSPSCHDDQQSLRRVKQQLGLSPKNLTARNISHQSRSGSFPRNGLQEVSLQRERCPVRHFSAAELTNV.

Residues Glu44 to Lys70 are disordered. Positions His52–Gln62 are enriched in low complexity. Positions Leu92–Pro270 form a coiled coil. Residues Met350–Ser425 form a disordered region. SAM domains are found at residues Trp457–Ala522, Asp535–Leu599, and Trp623–Met686. The segment at Pro703–Arg760 is disordered. The span at Lys742 to Phe758 shows a compositional bias: polar residues.

This sequence belongs to the kazrin family.

The sequence is that of Kazrin-A (kazna) from Danio rerio (Zebrafish).